A 303-amino-acid polypeptide reads, in one-letter code: Cyclin-dependent kinase 4 (303 aa).

Ala2 is subject to N-acetylalanine. The region spanning 6 to 295 is the Protein kinase domain; it reads YEPVAEIGVG…AFRALQHSYL (290 aa). Residues 12 to 20 and Lys35 contribute to the ATP site; that span reads IGVGAYGTV. Residues 50 to 56 form a required for binding D-type cyclins region; that stretch reads PISTVRE. Asp140 serves as the catalytic Proton acceptor. Thr172 carries the phosphothreonine; by CAK modification.

This sequence belongs to the protein kinase superfamily. CMGC Ser/Thr protein kinase family. CDC2/CDKX subfamily. As to quaternary structure, component of the D-CDK4 complex, composed of CDK4 and some D-type G1 cyclin (CCND1, CCND2 or CCND3). Interacts directly in the complex with CCND1, CCND2 or CCND3. Interacts with SEI1 and ZNF655. Forms a ternary complex, cyclin D-CDK4-CDKN1B, involved in modulating CDK4 enzymatic activity. Interacts directly with CDKN1B (phosphorylated on 'Tyr-88' and 'Tyr-89'); the interaction allows assembly of the cyclin D-CDK4 complex, Thr-172 phosphorylation, nuclear translocation and enhances the cyclin D-CDK4 complex activity. CDK4 activity is either inhibited or enhanced depending on stoichiometry of complex. The non-tyrosine-phosphorylated form of CDKN1B prevents T-loop phosphorylation of CDK4 producing inactive CDK4. Interacts (unphosphorylated form) with CDK2. Also forms ternary complexes with CDKN1A or CDKN2A. Interacts directly with CDKN1A (via its N-terminal); the interaction promotes the assembly of the cyclin D-CDK4 complex, its nuclear translocation and promotes the cyclin D-dependent enzyme activity of CDK4. Interacts with CCND1; the interaction is prevented with the binding of CCND1 to INSM1 during cell cycle progression. Probably forms a complex composed of chaperones HSP90 and HSP70, co-chaperones CDC37, PPP5C, TSC1 and client protein TSC2, CDK4, AKT, RAF1 and NR3C1; this complex does not contain co-chaperones STIP1/HOP and PTGES3/p23. Interacts with CEBPA (when phosphorylated). Interacts with FNIP1 and FNIP2. Post-translationally, phosphorylation at Thr-172 is required for enzymatic activity. Phosphorylated, in vitro, at this site by CCNH-CDK7, but, in vivo, appears to be phosphorylated by a proline-directed kinase. In the cyclin D-CDK4-CDKN1B complex, this phosphorylation and consequent CDK4 enzyme activity, is dependent on the tyrosine phosphorylation state of CDKN1B. Thus, in proliferating cells, CDK4 within the complex is phosphorylated on Thr-172 in the T-loop. In resting cells, phosphorylation on Thr-172 is prevented by the non-tyrosine-phosphorylated form of CDKN1B.

The protein localises to the cytoplasm. Its subcellular location is the nucleus. It is found in the nucleus membrane. It carries out the reaction L-seryl-[protein] + ATP = O-phospho-L-seryl-[protein] + ADP + H(+). It catalyses the reaction L-threonyl-[protein] + ATP = O-phospho-L-threonyl-[protein] + ADP + H(+). Its activity is regulated as follows. Both phosphorylation at Thr-172 and binding of a D-type cyclin are necessary for enzymatic activity. Full activation of the cyclin-D-CDK4 complex appears to require other factors such as recruitment of the substrate via a substrate recruitment motif, and/or formation of the CDKN1B ternary complex. Inhibited by INK4 family members. In resting cells, the non-tyrosine-phosphorylated form of CDKN1B prevents phosphorylation at Thr-172 and inactivation, while, in proliferating cells, tyrosine phosphorylation of CDKN1B allows phosphorylation of Thr-172 of CDK4 and subsequent activation. In terms of biological role, ser/Thr-kinase component of cyclin D-CDK4 (DC) complexes that phosphorylate and inhibit members of the retinoblastoma (RB) protein family including RB1 and regulate the cell-cycle during G(1)/S transition. Phosphorylation of RB1 allows dissociation of the transcription factor E2F from the RB/E2F complexes and the subsequent transcription of E2F target genes which are responsible for the progression through the G(1) phase. Hypophosphorylates RB1 in early G(1) phase. Cyclin D-CDK4 complexes are major integrators of various mitogenenic and antimitogenic signals. Also phosphorylates SMAD3 in a cell-cycle-dependent manner and represses its transcriptional activity. Component of the ternary complex, cyclin D/CDK4/CDKN1B, required for nuclear translocation and activity of the cyclin D-CDK4 complex. This is Cyclin-dependent kinase 4 (CDK4) from Bos taurus (Bovine).